We begin with the raw amino-acid sequence, 1196 residues long: NACHT, LRR and PYD domains-containing protein 1b allele 5 (1196 aa).

A disordered region spans residues 1 to 22; the sequence is MEESPPKQKSNTKVTQHEGQQD. One can recognise an NACHT domain in the interval 126–435; sequence QLVIIEGAAG…EFFAAISCIL (310 aa). Residue 132 to 139 coordinates ATP; the sequence is GAAGIGKS. LRR repeat units follow at residues 627 to 647 and 684 to 704; these read NLEGLDLSGNSLRYSVVQSLC and SLTELYLQLNDLGDDGVRMLC. The interval 789 to 922 is ZU5; it reads FWGPTGPVAT…GYTVLKNPSF (134 aa). In terms of domain architecture, FIIND spans 789-1072; sequence FWGPTGPVAT…KFDHLCDQEF (284 aa). The segment at 923-1072 is UPA; that stretch reads SPMGVVLRII…KFDHLCDQEF (150 aa). The CARD domain occupies 1106–1189; sequence HFMDQHREQL…HLVMDLFEKS (84 aa).

This sequence belongs to the NLRP family. Interacts with DPP9; leading to inhibit activation of the inflammasome. DPP9 acts via formation of a ternary complex, composed of a DPP9 homodimer, one full-length Nlrp1b protein, and one cleaved C-terminus of Nlrp1b (NACHT, LRR and PYD domains-containing protein 1b, C-terminus). Interacts with DPP8; leading to inhibit activation of the inflammasome, probably via formation of a ternary complex with DPP8. Interacts (via LRR repeats) with BCL2 and BCL2L1 (via the loop between motifs BH4 and BH3). Interacts with NOD2; this interaction may increase IL1B release. Interacts with EIF2AK2/PKR; this interaction requires EIF2AK2 activity, is accompanied by EIF2AK2 autophosphorylation and promotes inflammasome assembly in response to B.anthracis lethal toxin. Interacts with MEFV; this interaction targets Nlrp1b to degradation by autophagy, hence preventing excessive IL1B- and IL18-mediated inflammation. In terms of assembly, interacts with the C-terminal part of Nlrp1b (NACHT, LRR and PYD domains-containing protein 1b, C-terminus) in absence of pathogens and other damage-associated signals. As to quaternary structure, interacts with the N-terminal part of Nlrp1b (NACHT, LRR and PYD domains-containing protein 1b, N-terminus) in absence of pathogens and other damage-associated signals. Homomultimer; forms the Nlrp1b inflammasome polymeric complex, a filament composed of homopolymers of this form in response to pathogens and other damage-associated signals. The Nlrp1b inflammasome polymeric complex directly recruits pro-caspase-1 (proCASP1) independently of PYCARD/ASC. Interacts (via CARD domain) with CASP1 (via CARD domain); leading to CASP1 activation. In terms of processing, autocatalytically cleaved. Autocatalytic cleavage in FIIND region occurs constitutively, prior to activation signals, and is required for inflammasome activity (IL1B release), possibly by facilitating CASP1 binding. Both N- and C-terminal parts remain associated non-covalently. Ubiquitinated by the N-end rule pathway in response to pathogens and other damage-associated signals, leading to its degradation by the proteasome and subsequent release of the cleaved C-terminal part of the protein (NACHT, LRR and PYD domains-containing protein 1b, C-terminus), which polymerizes and forms the Nlrp1b inflammasome. Post-translationally, (Microbial infection) Cleavage by B.anthracis lethal toxin (LT) endopeptidase promotes ubiquitination and degradation of the N-terminal part, releasing the cleaved C-terminal part of the protein (NACHT, LRR and PYD domains-containing protein 1b, C-terminus), which polymerizes and forms the Nlrp1b inflammasome. Expressed in macrophages.

It is found in the cytoplasm. It localises to the cytosol. The protein resides in the inflammasome. Activated by cleavage by B.anthracis lethal toxin (LT) endopeptidase. Cleavage by LT promotes ubiquitination and degradation of the N-terminal part, releasing the cleaved C-terminal part of the protein (NACHT, LRR and PYD domains-containing protein 1b, C-terminus), which polymerizes and forms the Nlrp1b inflammasome. Nlrp1b inflammasome is inhibited by DPP8 and DPP9, which sequester the C-terminal fragment of Nlrp1b (NACHT, LRR and PYD domains-containing protein 1b, C-terminus) in a ternary complex, thereby preventing Nlrp1b oligomerization and activation. Nlrp1b inflammasome is activated by Val-boroPro (Talabostat, PT-100), an inhibitor of dipeptidyl peptidases DPP8 and DPP9. Val-boroPro relieves inhibition of DPP8 and/or DPP9 by promoting disruption of the ternary complex, releasing its C-terminal part from autoinhibition. Activated by metabolic inhibitors, such as 2-deoxy-D-glucose and sodium azide. Not activated by muramyl dipeptide, nor by full-length bacterial peptidoglycan. In terms of biological role, acts as the sensor component of the Nlrp1b inflammasome, which mediates inflammasome activation in response to various pathogen-associated signals, leading to subsequent pyroptosis. Inflammasomes are supramolecular complexes that assemble in the cytosol in response to pathogens and other damage-associated signals and play critical roles in innate immunity and inflammation. Acts as a recognition receptor (PRR): recognizes specific pathogens and other damage-associated signals, such as B.anthracis lethal toxin (LT) or Val-boroPro inhibitor, and mediates the formation of the inflammasome polymeric complex. In response to pathogen-associated signals, the N-terminal part of Nlrp1b is degraded by the proteasome, releasing the cleaved C-terminal part of the protein (NACHT, LRR and PYD domains-containing protein 1b, C-terminus), which polymerizes to initiate the formation of the inflammasome complex: the inflammasome directly recruits pro-caspase-1 (proCASP1) independently of PYCARD/ASC and promotes caspase-1 (CASP1) activation, which subsequently cleaves and activates inflammatory cytokines IL1B and IL18 and gasdermin-D (GSDMD), leading to pyroptosis. In the absence of GSDMD expression, the Nlrp1b inflammasome is able to recruit and activate CASP8, leading to activation of gasdermin-E (GSDME). Activation of Nlrp1b inflammasome is also required for HMGB1 secretion; the active cytokines and HMGB1 stimulate inflammatory responses. Primary mediator of macrophage susceptibility to B.anthracis LT: in response to B.anthracis infection, macrophages and dendritic cells release IL1B and undergo pyroptosis. This early inflammatory response to the toxin increases resistance to infection by B.anthracis spores. Constitutes the precursor of the Nlrp1b inflammasome, which mediates autoproteolytic processing within the FIIND domain to generate the N-terminal and C-terminal parts, which are associated non-covalently in absence of pathogens and other damage-associated signals. Functionally, regulatory part that prevents formation of the Nlrp1b inflammasome: in absence of pathogens and other damage-associated signals, interacts with the C-terminal part of Nlrp1b (NACHT, LRR and PYD domains-containing protein 1b, C-terminus), preventing activation of the Nlrp1b inflammasome. In response to pathogen-associated signals, this part is ubiquitinated by the N-end rule pathway and degraded by the proteasome, releasing the cleaved C-terminal part of the protein, which polymerizes and forms the Nlrp1b inflammasome. Its function is as follows. Constitutes the active part of the Nlrp1b inflammasome. In absence of pathogens and other damage-associated signals, interacts with the N-terminal part of Nlrp1b (NACHT, LRR and PYD domains-containing protein 1b, N-terminus), preventing activation of the Nlrp1b inflammasome. In response to pathogen-associated signals, the N-terminal part of Nlrp1b is degraded by the proteasome, releasing this form, which polymerizes to form the Nlrp1b inflammasome complex: the Nlrp1b inflammasome complex then directly recruits pro-caspase-1 (proCASP1) and promotes caspase-1 (CASP1) activation, leading to gasdermin-D (GSDMD) cleavage and subsequent pyroptosis. This is NACHT, LRR and PYD domains-containing protein 1b allele 5 (Nlrp1b) from Mus musculus (Mouse).